Here is a 257-residue protein sequence, read N- to C-terminus: Acetylglutamate kinase (257 aa).

Substrate contacts are provided by residues Gly-43–Gly-44, Arg-65, and Asn-157. Residues Asp-180–Leu-185 and Ile-208–Thr-210 each bind ATP.

Belongs to the acetylglutamate kinase family. ArgB subfamily. In terms of assembly, homodimer.

Its subcellular location is the cytoplasm. The enzyme catalyses N-acetyl-L-glutamate + ATP = N-acetyl-L-glutamyl 5-phosphate + ADP. It participates in amino-acid biosynthesis; L-arginine biosynthesis; N(2)-acetyl-L-ornithine from L-glutamate: step 2/4. Functionally, catalyzes the ATP-dependent phosphorylation of N-acetyl-L-glutamate. In Salmonella agona (strain SL483), this protein is Acetylglutamate kinase.